We begin with the raw amino-acid sequence, 174 residues long: RNA pyrophosphohydrolase (174 aa).

Residues 6–149 (GFRANVGIII…KRDVYRKVMK (144 aa)) form the Nudix hydrolase domain. The short motif at 38–59 (GGVDDGESAEEAMYRELYEEVG) is the Nudix box element.

The protein belongs to the Nudix hydrolase family. RppH subfamily. It depends on a divalent metal cation as a cofactor.

Functionally, accelerates the degradation of transcripts by removing pyrophosphate from the 5'-end of triphosphorylated RNA, leading to a more labile monophosphorylated state that can stimulate subsequent ribonuclease cleavage. This is RNA pyrophosphohydrolase from Shewanella oneidensis (strain ATCC 700550 / JCM 31522 / CIP 106686 / LMG 19005 / NCIMB 14063 / MR-1).